Here is a 269-residue protein sequence, read N- to C-terminus: Integral membrane protein 2C (269 aa).

The residue at position 39 (T39) is a Phosphothreonine. A helical; Signal-anchor for type II membrane protein membrane pass occupies residues 57–77 (VGGVCYLSMGMVVLLMGLVFA). A BRICHOS domain is found at 138-232 (FGGGDPADII…LCNGKDTYRL (95 aa)). A disulfide bond links C165 and C224. Residue N171 is glycosylated (N-linked (GlcNAc...) asparagine).

This sequence belongs to the ITM2 family. As to quaternary structure, interacts with BACE1. Interacts with APP. Interacts with STMN2. Type I membrane-bound, as well as soluble, furin has a pre-eminent role in ITM2C proteolytic processing. PCSK7 and PCSK5 may also be involved although to a lesser extent. The soluble form of PCSK7 is incapable of processing ITM2C. Fails to undergo shedding by ADAM10 and intramembrane cleavage by SPPL2B.

It is found in the lysosome membrane. Its subcellular location is the cell membrane. In terms of biological role, negative regulator of amyloid-beta peptide production. May inhibit the processing of APP by blocking its access to alpha- and beta-secretase. Binding to the beta-secretase-cleaved APP C-terminal fragment is negligible, suggesting that ITM2C is a poor gamma-secretase cleavage inhibitor. May play a role in TNF-induced cell death and neuronal differentiation. In Rattus norvegicus (Rat), this protein is Integral membrane protein 2C (Itm2c).